The sequence spans 679 residues: Kelch-like protein diablo (679 aa).

Residues Met1–Ser48 are compositionally biased toward gly residues. The segment at Met1–Pro84 is disordered. Residues Cys101–Glu168 form the BTB domain. Residues Cys203–Gly305 enclose the BACK domain. 6 Kelch repeats span residues Val352–Asp398, Leu400–Gly446, Phe447–Gly493, Leu495–Asn540, Ile542–Gly587, and Gln588–Ala634. Positions Cys643 to Leu679 are disordered. The span at Asn645–Leu679 shows a compositional bias: low complexity.

Its pathway is protein modification; protein ubiquitination. Functionally, probable substrate-specific adapter of an E3 ubiquitin-protein ligase complex which mediates the ubiquitination and subsequent proteasomal degradation of target proteins. May have a role in synapse differentiation and growth. This chain is Kelch-like protein diablo, found in Drosophila willistoni (Fruit fly).